The chain runs to 352 residues: ATP synthase subunit a 2 (352 aa).

Residues 1-26 (MRKKAISRILALVVPVLLSLNSQAFA) form the signal peptide. 7 helical membrane passes run 112-132 (VVMIWLAAILLVVIASAAGAS), 172-192 (FLPYLLTVFFFILVCNLLGLI), 195-215 (GATATGNINVTLTLSVFTFVI), 232-252 (HLTAGTHWALWIIMVPIEILG), 264-284 (LFANMTAGHIIILSLFFISFI), 289-309 (IVAVAVSIPFAIFIYLLELFV), and 310-330 (AFLQAYVFTMLSALFIGLATA).

This sequence belongs to the ATPase A chain family. In terms of assembly, F-type ATPases have 2 components, CF(1) - the catalytic core - and CF(0) - the membrane proton channel. CF(1) has five subunits: alpha(3), beta(3), gamma(1), delta(1), epsilon(1). CF(0) has four main subunits: a, b, b' and c.

It localises to the cell inner membrane. Functionally, key component of the proton channel; it plays a direct role in the translocation of protons across the membrane. The polypeptide is ATP synthase subunit a 2 (Chlorobaculum tepidum (strain ATCC 49652 / DSM 12025 / NBRC 103806 / TLS) (Chlorobium tepidum)).